A 148-amino-acid chain; its full sequence is SsrA-binding protein (148 aa).

It belongs to the SmpB family.

Its subcellular location is the cytoplasm. Required for rescue of stalled ribosomes mediated by trans-translation. Binds to transfer-messenger RNA (tmRNA), required for stable association of tmRNA with ribosomes. tmRNA and SmpB together mimic tRNA shape, replacing the anticodon stem-loop with SmpB. tmRNA is encoded by the ssrA gene; the 2 termini fold to resemble tRNA(Ala) and it encodes a 'tag peptide', a short internal open reading frame. During trans-translation Ala-aminoacylated tmRNA acts like a tRNA, entering the A-site of stalled ribosomes, displacing the stalled mRNA. The ribosome then switches to translate the ORF on the tmRNA; the nascent peptide is terminated with the 'tag peptide' encoded by the tmRNA and targeted for degradation. The ribosome is freed to recommence translation, which seems to be the essential function of trans-translation. The protein is SsrA-binding protein of Ehrlichia canis (strain Jake).